A 910-amino-acid chain; its full sequence is Protein kinase 3 (910 aa).

A compositionally biased stretch (gly residues) spans 119-129 (SPSGGGGGGSG). Disordered stretches follow at residues 119–239 (SPSG…PNLI), 270–295 (FNNN…KTPT), and 391–454 (NKDD…NDKK). 6 stretches are compositionally biased toward low complexity: residues 130-160 (VSSN…QPTS), 169-196 (LSES…QSTS), 209-220 (GLSGSSTSSSSA), 227-239 (NNNA…PNLI), 270-290 (FNNN…TTST), and 422-450 (INQP…TSQT). One can recognise a Protein kinase domain in the interval 498–763 (FELLKVLGVG…FEEISSHPFF (266 aa)). ATP contacts are provided by residues 504 to 512 (LGVGSFGRV) and K527. The active-site Proton acceptor is the D621. Phosphothreonine; by autocatalysis is present on T664. One can recognise an AGC-kinase C-terminal domain in the interval 764–854 (ELIPWRMLES…NKEEEDGIMG (91 aa)). Disordered regions lie at residues 786–812 (EISL…TLSC) and 859–910 (IGSI…KGSV). 2 stretches are compositionally biased toward low complexity: residues 788–809 (SLPN…NNLT) and 859–886 (IGSI…SGGS).

This sequence belongs to the protein kinase superfamily. AGC Ser/Thr protein kinase family.

It catalyses the reaction L-seryl-[protein] + ATP = O-phospho-L-seryl-[protein] + ADP + H(+). The catalysed reaction is L-threonyl-[protein] + ATP = O-phospho-L-threonyl-[protein] + ADP + H(+). The sequence is that of Protein kinase 3 (pkgC) from Dictyostelium discoideum (Social amoeba).